A 437-amino-acid chain; its full sequence is Histidinol dehydrogenase (437 aa).

Positions 133, 191, and 214 each coordinate NAD(+). Positions 240, 262, and 265 each coordinate substrate. Positions 262 and 265 each coordinate Zn(2+). Active-site proton acceptor residues include glutamate 329 and histidine 330. Substrate contacts are provided by histidine 330, aspartate 363, glutamate 417, and histidine 422. Zn(2+) is bound at residue aspartate 363. Histidine 422 provides a ligand contact to Zn(2+).

This sequence belongs to the histidinol dehydrogenase family. Homodimer. Requires Zn(2+) as cofactor.

The catalysed reaction is L-histidinol + 2 NAD(+) + H2O = L-histidine + 2 NADH + 3 H(+). It participates in amino-acid biosynthesis; L-histidine biosynthesis; L-histidine from 5-phospho-alpha-D-ribose 1-diphosphate: step 9/9. Functionally, catalyzes the sequential NAD-dependent oxidations of L-histidinol to L-histidinaldehyde and then to L-histidine. This is Histidinol dehydrogenase from Blochmanniella floridana.